The chain runs to 236 residues: Large ribosomal subunit protein uL3 (236 aa).

Belongs to the universal ribosomal protein uL3 family. Part of the 50S ribosomal subunit. Forms a cluster with proteins L14 and L19.

One of the primary rRNA binding proteins, it binds directly near the 3'-end of the 23S rRNA, where it nucleates assembly of the 50S subunit. The protein is Large ribosomal subunit protein uL3 of Anaeromyxobacter dehalogenans (strain 2CP-C).